The sequence spans 1192 residues: Probable inactive serine/threonine-protein kinase DDB_G0280131 (1192 aa).

Disordered regions lie at residues Ser-23–Glu-90, Asp-144–Asp-189, Val-201–Ala-236, Ser-301–Ser-406, and Asp-478–Lys-499. A compositionally biased stretch (low complexity) spans Asn-26–Asn-43. The span at Ser-44–Asn-60 shows a compositional bias: polar residues. 2 stretches are compositionally biased toward low complexity: residues Ser-61–Ala-73 and Ser-154–Asn-175. Residues Val-201–Thr-232 show a composition bias toward pro residues. The span at Ser-301 to Asn-324 shows a compositional bias: low complexity. The segment covering Lys-325 to Thr-338 has biased composition (polar residues). The segment covering Pro-362–Gln-376 has biased composition (low complexity). Positions Pro-377–Pro-391 are enriched in pro residues. Composition is skewed to low complexity over residues Thr-392–Thr-402 and Asn-485–Asn-498. Residues Ala-521–His-783 form the Protein kinase domain. ATP is bound by residues Ile-527–Thr-535 and Lys-549. The interval Lys-790 to Val-831 is disordered. Residues Pro-791–Gln-828 are compositionally biased toward low complexity.

The protein belongs to the protein kinase superfamily. TKL Ser/Thr protein kinase family.

The sequence is that of Probable inactive serine/threonine-protein kinase DDB_G0280131 from Dictyostelium discoideum (Social amoeba).